The sequence spans 115 residues: Disintegrin EC6 subunit alpha (115 aa).

Residues Met-1–Ser-20 form the signal peptide. The propeptide occupies Ile-21–Met-47. A Disintegrin domain is found at Asn-48–Lys-112. Disulfide bonds link Cys-53-Cys-76, Cys-67-Cys-73, Cys-72-Cys-97, and Cys-85-Cys-104. The Cell attachment site; atypical (MLD) motif lies at Met-89–Asp-91.

The protein belongs to the disintegrin family. Dimeric disintegrin subfamily. In terms of assembly, heterodimer with subunit beta; disulfide-linked. Expressed by the venom gland.

The protein resides in the secreted. Potently inhibits adhesion of alpha-4/beta-1 (ITGA4/ITGB1) and alpha-9/beta-1 (ITGA9/ITGB1) integrins to VCAM1, and adhesion of alpha-5/beta-1 (ITGA5/ITGB1) integrin to fibronectin. Has a much less effect on alpha-IIb/beta-3 (ITGA2B/ITGB3) integrin. Also potently inhibits neutrophil migration across TNF-alpha-activated human umbilical endothelial cells. This chain is Disintegrin EC6 subunit alpha, found in Echis carinatus sochureki (Saw-scaled viper).